The following is a 409-amino-acid chain: MARSKFERKKPHVNIGTIGHVDHGKTTLTAAISATLSTLGSTAAKKFDEIDAAPEEKARGITINTAHVEYETDNRHYAHVDCPGHADYVKNMITGAAQMDGAILVVSAADGPMPQTREHILLAKQVGVPTLVVFLNKEDQVDDEELLELVELEGRELLSQYDFPGDDIPFVAGSALLALEAVTKNTSIKKGEDKWVDKIFSLMEAVDTYIPTPERDVDKTFLMAVEDVFSITGRGTVATGRIERGIIKVGDTIEIVGLRETRTTTITGLEMFQKTLEEGLAGDNIGILLRGVQKKDIERGMVLAKPGTITPHTQFEAEVYILTKEEGGRHTPFFPGYRPQFYVRTTDVTGTINQFTADDGTDAEMVMPGDRIKMTAELINAIAIEQGMRFAIREGGRTVGAGVVSKILK.

The 205-residue stretch at lysine 10–glutamate 214 folds into the tr-type G domain. A G1 region spans residues glycine 19–threonine 26. Residue glycine 19–threonine 26 participates in GTP binding. Threonine 26 contributes to the Mg(2+) binding site. The interval glycine 60 to asparagine 64 is G2. The segment at aspartate 81 to glycine 84 is G3. GTP contacts are provided by residues aspartate 81–histidine 85 and asparagine 136–aspartate 139. The segment at asparagine 136 to aspartate 139 is G4. Positions serine 174–leucine 176 are G5.

Belongs to the TRAFAC class translation factor GTPase superfamily. Classic translation factor GTPase family. EF-Tu/EF-1A subfamily.

The protein resides in the plastid. It localises to the chloroplast. The enzyme catalyses GTP + H2O = GDP + phosphate + H(+). Its function is as follows. GTP hydrolase that promotes the GTP-dependent binding of aminoacyl-tRNA to the A-site of ribosomes during protein biosynthesis. The chain is Elongation factor Tu, chloroplastic (tufA) from Porphyra purpurea (Red seaweed).